The chain runs to 97 residues: Large ribosomal subunit protein bL28 (97 aa).

Belongs to the bacterial ribosomal protein bL28 family.

The sequence is that of Large ribosomal subunit protein bL28 from Rhizorhabdus wittichii (strain DSM 6014 / CCUG 31198 / JCM 15750 / NBRC 105917 / EY 4224 / RW1) (Sphingomonas wittichii).